Consider the following 285-residue polypeptide: Tropomyosin alpha-3 chain (285 aa).

Residues 1-285 adopt a coiled-coil conformation; it reads MMEAIKKKMQ…DHALNDMTSI (285 aa). Met2 is modified (N-acetylmethionine). Position 2 is an N-acetylalanine (Met2). Thr54 bears the Phosphothreonine mark. 2 positions are modified to phosphoserine: Ser62 and Ser88. Phosphothreonine is present on Thr109. 2 positions are modified to phosphoserine: Ser207 and Ser216. Ile228 bears the N6-acetyllysine mark. Residue Thr253 is modified to Phosphothreonine. The residue at position 262 (Tyr262) is a Phosphotyrosine. Residue Ser272 is modified to Phosphoserine. Residue Thr283 is modified to Phosphothreonine. Ser284 is modified (phosphoserine).

Belongs to the tropomyosin family. As to quaternary structure, homodimer. Heterodimer of an alpha (TPM1, TPM3 or TPM4) and a beta (TPM2) chain. Interacts with TMOD1. Interacts with TNNT1.

The protein localises to the cytoplasm. Its subcellular location is the cytoskeleton. In terms of biological role, binds to actin filaments in muscle and non-muscle cells. Plays a central role, in association with the troponin complex, in the calcium dependent regulation of vertebrate striated muscle contraction. Smooth muscle contraction is regulated by interaction with caldesmon. In non-muscle cells is implicated in stabilizing cytoskeleton actin filaments. The protein is Tropomyosin alpha-3 chain (Tpm3) of Mus musculus (Mouse).